A 481-amino-acid chain; its full sequence is UDP-N-acetylmuramoyl-L-alanyl-D-glutamate--L-lysine ligase (481 aa).

Serine 42 is a binding site for UDP-N-acetyl-alpha-D-muramoyl-L-alanyl-D-glutamate. 118–124 is a binding site for ATP; the sequence is GTKGKTT. UDP-N-acetyl-alpha-D-muramoyl-L-alanyl-D-glutamate is bound by residues glutamine 158, 160 to 161, serine 187, and arginine 195; that span reads TT. Lysine 229 carries the N6-carboxylysine modification. An L-lysine recognition motif motif is present at residues 404 to 407; that stretch reads DDPN.

It belongs to the MurCDEF family. MurE subfamily. Post-translationally, carboxylation is probably crucial for Mg(2+) binding and, consequently, for the gamma-phosphate positioning of ATP.

The protein resides in the cytoplasm. The enzyme catalyses UDP-N-acetyl-alpha-D-muramoyl-L-alanyl-D-glutamate + L-lysine + ATP = UDP-N-acetyl-alpha-D-muramoyl-L-alanyl-gamma-D-glutamyl-L-lysine + ADP + phosphate + H(+). The protein operates within cell wall biogenesis; peptidoglycan biosynthesis. In terms of biological role, catalyzes the addition of L-lysine to the nucleotide precursor UDP-N-acetylmuramoyl-L-alanyl-D-glutamate (UMAG) in the biosynthesis of bacterial cell-wall peptidoglycan. The chain is UDP-N-acetylmuramoyl-L-alanyl-D-glutamate--L-lysine ligase from Streptococcus pyogenes serotype M4 (strain MGAS10750).